The primary structure comprises 215 residues: LexA repressor (215 aa).

The H-T-H motif DNA-binding region spans Arg28–Arg48. Residues Ser133 and Lys170 each act as for autocatalytic cleavage activity in the active site.

This sequence belongs to the peptidase S24 family. Homodimer.

The enzyme catalyses Hydrolysis of Ala-|-Gly bond in repressor LexA.. Its function is as follows. Represses a number of genes involved in the response to DNA damage (SOS response), including recA and lexA. In the presence of single-stranded DNA, RecA interacts with LexA causing an autocatalytic cleavage which disrupts the DNA-binding part of LexA, leading to derepression of the SOS regulon and eventually DNA repair. This is LexA repressor from Burkholderia ambifaria (strain ATCC BAA-244 / DSM 16087 / CCUG 44356 / LMG 19182 / AMMD) (Burkholderia cepacia (strain AMMD)).